Reading from the N-terminus, the 312-residue chain is DNA-directed RNA polymerase subunit alpha (312 aa).

Positions 1–226 (MIEFEKPKIT…DHLNLFVDLS (226 aa)) are alpha N-terminal domain (alpha-NTD). Residues 243-312 (TERVLDKIIE…ELGLSLKKRK (70 aa)) are alpha C-terminal domain (alpha-CTD).

Belongs to the RNA polymerase alpha chain family. As to quaternary structure, homodimer. The RNAP catalytic core consists of 2 alpha, 1 beta, 1 beta' and 1 omega subunit. When a sigma factor is associated with the core the holoenzyme is formed, which can initiate transcription.

The enzyme catalyses RNA(n) + a ribonucleoside 5'-triphosphate = RNA(n+1) + diphosphate. Its function is as follows. DNA-dependent RNA polymerase catalyzes the transcription of DNA into RNA using the four ribonucleoside triphosphates as substrates. The sequence is that of DNA-directed RNA polymerase subunit alpha from Lactococcus lactis subsp. cremoris (strain SK11).